The sequence spans 102 residues: Secreted RxLR effector protein 61 (102 aa).

Residues 1-22 (MAFQLRIVQHLLHITFLRLPLA) form the signal peptide. Residues 51–60 (RRLRQLNEHR) carry the RxLR-dEER motif.

The protein belongs to the RxLR effector family.

Its subcellular location is the secreted. The protein localises to the host chloroplast envelope. It localises to the host cytoplasm. It is found in the host nucleus. In terms of biological role, effector that partially suppresses the tobacco programmed cell death induced by cell death-inducing proteins. In Plasmopara viticola (Downy mildew of grapevine), this protein is Secreted RxLR effector protein 61.